The chain runs to 330 residues: RNA polymerase sigma factor RpoS (330 aa).

The sigma-70 factor domain-1 stretch occupies residues 56 to 89 (DATQLYLGEIGYSPLLTAEEEVYFARRALRGDVA). Residues 94-164 (MIESNLRLVV…ERAIMNQTRT (71 aa)) form a sigma-70 factor domain-2 region. Positions 118-121 (DLIE) match the Interaction with polymerase core subunit RpoC motif. The segment at 174 to 249 (ELNVYLRTAR…DEKENGPEDT (76 aa)) is sigma-70 factor domain-3. The tract at residues 262-315 (WLFELNAKQREVLARRFGLLGYEAATLEDVGREIGLTRERVRQIQVEGLRRLRE) is sigma-70 factor domain-4. The segment at residues 288-307 (LEDVGREIGLTRERVRQIQV) is a DNA-binding region (H-T-H motif).

This sequence belongs to the sigma-70 factor family. RpoS subfamily. As to quaternary structure, interacts with the RNA polymerase core enzyme.

The protein resides in the cytoplasm. Its function is as follows. Sigma factors are initiation factors that promote the attachment of RNA polymerase to specific initiation sites and are then released. This sigma factor is the master transcriptional regulator of the stationary phase and the general stress response. This Shigella flexneri protein is RNA polymerase sigma factor RpoS.